The sequence spans 186 residues: Adenylate kinase (186 aa).

An ATP-binding site is contributed by 14-19 (GAGKGT). Residues 34 to 63 (STGDILRDHVARGTPLGERVRPIMERGDLV) form an NMP region. AMP contacts are provided by residues threonine 35, arginine 40, 61 to 63 (DLV), 84 to 87 (GFPR), and glutamine 91. Residues 125–135 (RRAELEGRSDD) form an LID region. An ATP-binding site is contributed by arginine 126. Positions 132 and 143 each coordinate AMP. Glycine 171 provides a ligand contact to ATP.

It belongs to the adenylate kinase family. In terms of assembly, monomer.

It localises to the cytoplasm. It catalyses the reaction AMP + ATP = 2 ADP. It participates in purine metabolism; AMP biosynthesis via salvage pathway; AMP from ADP: step 1/1. Catalyzes the reversible transfer of the terminal phosphate group between ATP and AMP. Plays an important role in cellular energy homeostasis and in adenine nucleotide metabolism. The sequence is that of Adenylate kinase from Thermus thermophilus (strain ATCC BAA-163 / DSM 7039 / HB27).